Reading from the N-terminus, the 340-residue chain is Ras association domain-containing protein 1 (340 aa).

Ser-2 carries the post-translational modification N-acetylserine. The residue at position 2 (Ser-2) is a Phosphoserine. A mediates interaction with E4F1 region spans residues 2 to 115 (SAEPELIELR…DLGWDSALER (114 aa)). The Phorbol-ester/DAG-type zinc finger occupies 51 to 101 (GHRFQPAGPTTHTWCDLCGDFIWGVVRKGLQCAHCKFTCHYRCRALVCLDC). Residues 175–185 (SVPSSKKPPSL) are compositionally biased toward low complexity. The interval 175–196 (SVPSSKKPPSLQDARRGTGRST) is disordered. One can recognise a Ras-associating domain in the interval 194–288 (RSTAVKRRTS…LSFVLKENDS (95 aa)). The region spanning 290–337 (EVNWDAFSMPELHNFLRILQREEEEHLRQILQKYSRCRQKIQEALHAC) is the SARAH domain. The tract at residues 311 to 314 (EEEE) is MOAP1-binding.

As to quaternary structure, interacts with MAP1S and XPA. Binds to the N-terminal of CDC20 during prometaphase. Binds to STK3/MST2 and STK4/MST1. Recruited to the TNFRSF1A and TNFRSF10A complexes in response to their respective cognate ligand, after internalization. Can self-associate. Part of a complex with MDM2, DAXX, RASSF1 and USP7. In terms of assembly, interacts with MOAP1 and E4F1. Interacts with RSSF5 and probably associates with HRAS via a RSSF1 isoform A-RSSF5 heterodimer. Interacts (via C-terminus) with DAXX (via N-terminus); the interaction is independent of MDM2 and TP53. Interacts (via N-terminus) with MDM2 (via C-terminus); the interaction is independent of TP53. Interacts with RAB39A. Interacts with RAB39B; the interaction is weak. Interacts with ECM2. Interacts with RAB39B; the interaction is strong. Does not interact with RAB39A.

It is found in the cytoplasm. The protein localises to the cytoskeleton. It localises to the microtubule organizing center. The protein resides in the centrosome. Its subcellular location is the spindle. It is found in the spindle pole. The protein localises to the nucleus. Potential tumor suppressor. Required for death receptor-dependent apoptosis. Mediates activation of Mediates activation of STK3/MST2 and STK4/MST1 during Fas-induced apoptosis by preventing their dephosphorylation. When associated with MOAP1, promotes BAX conformational change and translocation to mitochondrial membranes in response to TNF and TNFSF10 stimulation. Isoform A interacts with CDC20, an activator of the anaphase-promoting complex, APC, resulting in the inhibition of APC activity and mitotic progression. Inhibits proliferation by negatively regulating cell cycle progression at the level of G1/S-phase transition by regulating accumulation of cyclin D1 protein. Isoform C has been shown not to perform these roles, no function has been identified for this isoform. Isoform A disrupts interactions among MDM2, DAXX and USP7, thus contributing to the efficient activation of TP53 by promoting MDM2 self-ubiquitination in cell-cycle checkpoint control in response to DNA damage. The sequence is that of Ras association domain-containing protein 1 from Mus musculus (Mouse).